Consider the following 250-residue polypeptide: Cell division protein ZapD (250 aa).

It belongs to the ZapD family. As to quaternary structure, interacts with FtsZ.

It is found in the cytoplasm. Its function is as follows. Cell division factor that enhances FtsZ-ring assembly. Directly interacts with FtsZ and promotes bundling of FtsZ protofilaments, with a reduction in FtsZ GTPase activity. The chain is Cell division protein ZapD from Photorhabdus laumondii subsp. laumondii (strain DSM 15139 / CIP 105565 / TT01) (Photorhabdus luminescens subsp. laumondii).